The chain runs to 299 residues: MEEVEISTEKKSNPVKSFIAGGVGGMCNVLVGHPLDTIKVRLQTMPTPPPGQPPRYKGVIDCAARTFRYEGFRGFYRGISAPLVGVTPIYAVDFAVYAAGKRLFQTDDHIRLTYPQIFAAGALAGVCSALVTVPTDRIKVLLQTQTVSNGPLLYNGTIDTAAKLYRQGGIRSLFKGTCACILRDSPTGFYFVTYEFLQELARKKSANGKISTTSTILSGGTAGIVFWTLAVPFDVLKSRLQSAPEGTYKHGIRSVFRNLMATEGPKALFRGILPILLRAFPSTAAVFFGVELTNDLLKA.

Solcar repeat units follow at residues 12 to 103 (SNPV…GKRL), 112 to 200 (LTYP…LQEL), and 210 to 296 (ISTT…TNDL). The next 4 helical transmembrane spans lie at 79–99 (ISAP…VYAA), 114–134 (YPQI…VTVP), 216–236 (ILSG…FDVL), and 272–292 (ILPI…GVEL).

It belongs to the mitochondrial carrier (TC 2.A.29) family.

It localises to the mitochondrion membrane. In terms of biological role, mediates efflux of magnesium ions from mitochondria, suggesting a role in magnesium homeostasis. This is Mitochondrial magnesium exporter 1 from Drosophila melanogaster (Fruit fly).